The primary structure comprises 794 residues: Interphotoreceptor matrix proteoglycan 1 (794 aa).

The first 20 residues, 1–20, serve as a signal peptide directing secretion; the sequence is MHLEAARVIFFLWIFLQVQG. Residues 202–213 are compositionally biased toward polar residues; the sequence is MTTAQRNPQLHP. 3 disordered regions span residues 202 to 221, 314 to 355, and 413 to 449; these read MTTAQRNPQLHPSRTPRVPT, KGKA…LYPT, and SPELPLGQPRLETVDRAGHSPPGASPTDGWSPPAMTS. An SEA 1 domain is found at 236–357; that stretch reads LEQKVELSIS…KQRELYPTAS (122 aa). A compositionally biased stretch (basic and acidic residues) spans 332–351; it reads NKIESEGDPRGTTEEEKQRE. T425 and T439 each carry an O-linked (GalNAc...) threonine glycan. O-linked (GalNAc...) serine glycosylation is present at S443. O-linked (GalNAc...) threonine glycans are attached at residues T448 and T450. One can recognise an SEA 2 domain in the interval 579-692; that stretch reads RELVVFFSLR…YSLDVEPADQ (114 aa). N-linked (GlcNAc...) asparagine glycosylation is present at N624. Positions 629–637 match the Heparin- and hyaluronan-binding motif; that stretch reads KQLEILNFR. Residue N656 is glycosylated (N-linked (GlcNAc...) asparagine).

Highly glycosylated (N- and O-linked carbohydrates and sialic acid).

The protein resides in the cell projection. It localises to the cilium. Its subcellular location is the photoreceptor outer segment. The protein localises to the secreted. It is found in the extracellular space. The protein resides in the extracellular matrix. It localises to the interphotoreceptor matrix. Its subcellular location is the photoreceptor inner segment. Chondroitin sulfate-, heparin- and hyaluronan-binding protein. May serve to form a basic macromolecular scaffold comprising the insoluble interphotoreceptor matrix. The protein is Interphotoreceptor matrix proteoglycan 1 (IMPG1) of Bos taurus (Bovine).